Here is a 222-residue protein sequence, read N- to C-terminus: Charged multivesicular body protein 2a (222 aa).

Met-1 carries the N-acetylmethionine modification. Residues Glu-12–Gln-53 adopt a coiled-coil conformation. The segment at Met-56–Asp-222 is interaction with VPS4B. Polar residues predominate over residues Leu-179–Ser-188. The segment at Leu-179–Ala-198 is disordered. Ser-184 carries the phosphoserine modification. The residue at position 185 (Thr-185) is a Phosphothreonine. Ser-188, Ser-190, and Ser-203 each carry phosphoserine. Residues Gly-195–Asp-222 adopt a coiled-coil conformation. The short motif at Ala-210 to Arg-220 is the MIT-interacting motif element. The segment at Lys-217–Asp-222 is interaction with VTA1.

It belongs to the SNF7 family. In terms of assembly, probable core component of the endosomal sorting required for transport complex III (ESCRT-III). ESCRT-III components are thought to multimerize to form a flat lattice on the perimeter membrane of the endosome. Several assembly forms of ESCRT-III may exist that interact and act sequentially. In vitro, heteromerizes with CHMP3 (but not CHMP4) to form helical tubular structures that expose membrane-interacting sites on the outside whereas VPS4B can associate on the inside of the tubule. Interacts with CHMP1B, CHMP2B, CHMP3, CHMP4A, CHMP4B, CHMP4C and CHMP5. Interacts with VPS4A; the interaction is direct. Interacts with VPS4B; the interaction is direct. Interacts with MITD1. Interacts with VTA1; the interaction probably involves the open conformation of CHMP2A. ISGylated in a CHMP5-dependent manner. Isgylation weakens and inhibits its interactions with VPS4A and VTA1 respectively. As to expression, widely expressed. Highly expressed in brain, heart, liver and kidney.

Its subcellular location is the late endosome membrane. The protein resides in the cytoplasm. It localises to the nucleus envelope. In terms of biological role, probable core component of the endosomal sorting required for transport complex III (ESCRT-III) which is involved in multivesicular bodies (MVBs) formation and sorting of endosomal cargo proteins into MVBs. MVBs contain intraluminal vesicles (ILVs) that are generated by invagination and scission from the limiting membrane of the endosome and mostly are delivered to lysosomes enabling degradation of membrane proteins, such as stimulated growth factor receptors, lysosomal enzymes and lipids. The MVB pathway appears to require the sequential function of ESCRT-O, -I,-II and -III complexes. ESCRT-III proteins mostly dissociate from the invaginating membrane before the ILV is released. The ESCRT machinery also functions in topologically equivalent membrane fission events, such as the terminal stages of cytokinesis. Together with SPAST, the ESCRT-III complex promotes nuclear envelope sealing and mitotic spindle disassembly during late anaphase. Recruited to the reforming nuclear envelope (NE) during anaphase by LEMD2. ESCRT-III proteins are believed to mediate the necessary vesicle extrusion and/or membrane fission activities, possibly in conjunction with the AAA ATPase VPS4. This Mus musculus (Mouse) protein is Charged multivesicular body protein 2a (Chmp2a).